Consider the following 536-residue polypeptide: Chlorophyllide a oxygenase, chloroplastic (536 aa).

A chloroplast-targeting transit peptide spans 1–36 (MNAAVFSPSALSLPISFSKTRSSFLSRKKGVKGEFR). A coiled-coil region spans residues 123-150 (IGTVKKELAGLQEELSKAHQQVHISEAR). The 101-residue stretch at 221 to 321 (WYPVAFTADL…CLEQEGMIWI (101 aa)) folds into the Rieske domain. [2Fe-2S] cluster contacts are provided by Cys-262, His-264, Cys-281, and His-284. Positions 360, 364, 367, and 372 each coordinate Fe cation.

The protein localises to the plastid. It localises to the chloroplast membrane. Its subcellular location is the chloroplast thylakoid membrane. It carries out the reaction chlorophyllide a + 2 NADPH + 2 O2 + 2 H(+) = chlorophyllide b + 2 NADP(+) + 3 H2O. The protein operates within porphyrin-containing compound metabolism; chlorophyll biosynthesis. Catalyzes a two-step oxygenase reaction involved in the synthesis of chlorophyll b. Acts specifically on the non-esterified chlorophyllide a and not on chlorophyll a. In Arabidopsis thaliana (Mouse-ear cress), this protein is Chlorophyllide a oxygenase, chloroplastic (CAO).